Here is a 970-residue protein sequence, read N- to C-terminus: UvrABC system protein A (970 aa).

Position 34-41 (34-41) interacts with ATP; that stretch reads GVSGSGKS. Residues 284–311 form a C4-type zinc finger; it reads CPEHGAVMDELSPRLFSFNSPYGACPDC. 2 consecutive ABC transporter domains span residues 340–617 and 637–965; these read WSEK…QRSL and GNGA…KYLA. An ATP-binding site is contributed by 669-676; that stretch reads GVSGSGKS. The C4-type zinc-finger motif lies at 768–794; that stretch reads CEACAGQGVNVIEMNFLPDVYVQCDVC.

This sequence belongs to the ABC transporter superfamily. UvrA family. Forms a heterotetramer with UvrB during the search for lesions.

The protein localises to the cytoplasm. Functionally, the UvrABC repair system catalyzes the recognition and processing of DNA lesions. UvrA is an ATPase and a DNA-binding protein. A damage recognition complex composed of 2 UvrA and 2 UvrB subunits scans DNA for abnormalities. When the presence of a lesion has been verified by UvrB, the UvrA molecules dissociate. This Synechocystis sp. (strain ATCC 27184 / PCC 6803 / Kazusa) protein is UvrABC system protein A.